The sequence spans 228 residues: ATP synthase subunit a 2 (228 aa).

6 consecutive transmembrane segments (helical) span residues 16 to 36 (VGTT…GAWL), 74 to 94 (VFPF…SSLI), 103 to 123 (DLSA…WFGI), 139 to 159 (SPFL…ALAV), 173 to 193 (LLVL…LHIV), and 194 to 214 (EALV…AGAI).

It belongs to the ATPase A chain family. F-type ATPases have 2 components, CF(1) - the catalytic core - and CF(0) - the membrane proton channel. CF(1) has five subunits: alpha(3), beta(3), gamma(1), delta(1), epsilon(1). CF(0) has three main subunits: a(1), b(2) and c(9-12). The alpha and beta chains form an alternating ring which encloses part of the gamma chain. CF(1) is attached to CF(0) by a central stalk formed by the gamma and epsilon chains, while a peripheral stalk is formed by the delta and b chains.

The protein localises to the cell inner membrane. Its function is as follows. Key component of the proton channel; it plays a direct role in the translocation of protons across the membrane. The chain is ATP synthase subunit a 2 from Pelobacter propionicus (strain DSM 2379 / NBRC 103807 / OttBd1).